We begin with the raw amino-acid sequence, 500 residues long: GTPase Der (500 aa).

EngA-type G domains lie at 3–166 (PVVA…MEEL) and 211–384 (IKLA…VSAT). Residues 9–16 (GRPNVGKS), 56–60 (DTGGI), 118–121 (NKID), 217–224 (GRPNVGKS), 264–268 (DTAGV), and 329–332 (NKWD) contribute to the GTP site. The 85-residue stretch at 385–469 (KRVGTSVLTR…PIRIQFQNSE (85 aa)) folds into the KH-like domain. Residues 481–500 (LSQERQRKRLVGAVKNRNKK) form a disordered region. Residues 486–500 (QRKRLVGAVKNRNKK) are compositionally biased toward basic residues.

Belongs to the TRAFAC class TrmE-Era-EngA-EngB-Septin-like GTPase superfamily. EngA (Der) GTPase family. As to quaternary structure, associates with the 50S ribosomal subunit.

In terms of biological role, GTPase that plays an essential role in the late steps of ribosome biogenesis. The polypeptide is GTPase Der (Aliivibrio salmonicida (strain LFI1238) (Vibrio salmonicida (strain LFI1238))).